The chain runs to 119 residues: Glucitol operon activator protein (119 aa).

A DNA-binding region (H-T-H motif) is located at residues 23 to 29 (QISRFNR).

In terms of biological role, positive regulator for glucitol operon expression. The sequence is that of Glucitol operon activator protein (gutM) from Escherichia coli (strain K12).